We begin with the raw amino-acid sequence, 144 residues long: Large ribosomal subunit protein uL16 (144 aa).

The protein belongs to the universal ribosomal protein uL16 family. Part of the 50S ribosomal subunit.

Its function is as follows. Binds 23S rRNA and is also seen to make contacts with the A and possibly P site tRNAs. This chain is Large ribosomal subunit protein uL16, found in Lacticaseibacillus paracasei (strain ATCC 334 / BCRC 17002 / CCUG 31169 / CIP 107868 / KCTC 3260 / NRRL B-441) (Lactobacillus paracasei).